Here is a 308-residue protein sequence, read N- to C-terminus: Aspartate carbamoyltransferase catalytic subunit (308 aa).

Residues R57 and T58 each contribute to the carbamoyl phosphate site. Residue K86 coordinates L-aspartate. Carbamoyl phosphate contacts are provided by R107, H135, and Q138. 2 residues coordinate L-aspartate: R168 and R228. The carbamoyl phosphate site is built by L267 and P268.

This sequence belongs to the aspartate/ornithine carbamoyltransferase superfamily. ATCase family. In terms of assembly, heterododecamer (2C3:3R2) of six catalytic PyrB chains organized as two trimers (C3), and six regulatory PyrI chains organized as three dimers (R2).

It catalyses the reaction carbamoyl phosphate + L-aspartate = N-carbamoyl-L-aspartate + phosphate + H(+). Its pathway is pyrimidine metabolism; UMP biosynthesis via de novo pathway; (S)-dihydroorotate from bicarbonate: step 2/3. Catalyzes the condensation of carbamoyl phosphate and aspartate to form carbamoyl aspartate and inorganic phosphate, the committed step in the de novo pyrimidine nucleotide biosynthesis pathway. The polypeptide is Aspartate carbamoyltransferase catalytic subunit (Leptospira interrogans serogroup Icterohaemorrhagiae serovar Lai (strain 56601)).